An 857-amino-acid polypeptide reads, in one-letter code: Inactive rhomboid protein 1 (857 aa).

Residues 1 to 413 lie on the Cytoplasmic side of the membrane; it reads MAELRRDSTS…HRPFFTYWIT (413 aa). The tract at residues 283 to 307 is disordered; the sequence is FESPSDSTMKDVDSKQLDESELTGS. Residues 290-300 are compositionally biased toward basic and acidic residues; it reads TMKDVDSKQLD. A helical membrane pass occupies residues 414 to 434; that stretch reads FVHILITILAVCIYGIAPVGF. Residues 435–661 are Lumenal-facing; it reads SQHETVDSVL…PDQFYRLWLS (227 aa). N-linked (GlcNAc...) asparagine glycosylation occurs at asparagine 585. A helical membrane pass occupies residues 662-682; that stretch reads LFLHAGILHCLVSVCFQMTIL. The Cytoplasmic segment spans residues 683 to 693; that stretch reads RDLEKLAGWLR. A helical membrane pass occupies residues 694–714; the sequence is ISIIYILSGITGNLASAIFLP. The Lumenal portion of the chain corresponds to 715-716; that stretch reads YR. The chain crosses the membrane as a helical span at residues 717–737; sequence AEVGPAGSQFGILACLFVELI. Over 738 to 748 the chain is Cytoplasmic; the sequence is QSWQILAQPWR. Residues 749-769 traverse the membrane as a helical segment; sequence AFTKLLCVVLFLFAFGLLPWI. At 770-774 the chain is on the lumenal side; that stretch reads DNFAH. A helical membrane pass occupies residues 775 to 795; the sequence is ISGFISGFFLSFAFLPYISFG. At 796–805 the chain is on the cytoplasmic side; that stretch reads RLDMYRKRCQ. A helical transmembrane segment spans residues 806 to 826; that stretch reads IIIFLVVFLGLFAGLVVLFYV. The Lumenal segment spans residues 827–857; that stretch reads HPIKCEWCELLTCIPFTDKFCEKYDLNAHLH.

The protein belongs to the peptidase S54 family.

The protein localises to the endoplasmic reticulum membrane. It localises to the golgi apparatus membrane. Functionally, regulates ADAM17 protease, a sheddase of the epidermal growth factor (EGF) receptor ligands and TNF, thereby plays a role in sleep, cell survival, proliferation, migration and inflammation. Does not exhibit any protease activity on its own. This chain is Inactive rhomboid protein 1 (rhbdf1), found in Danio rerio (Zebrafish).